Here is a 1271-residue protein sequence, read N- to C-terminus: DNA-directed RNA polymerase subunit beta (1271 aa).

The protein belongs to the RNA polymerase beta chain family. In terms of assembly, the RNAP catalytic core consists of 2 alpha, 1 beta, 1 beta' and 1 omega subunit. When a sigma factor is associated with the core the holoenzyme is formed, which can initiate transcription.

The enzyme catalyses RNA(n) + a ribonucleoside 5'-triphosphate = RNA(n+1) + diphosphate. Its function is as follows. DNA-dependent RNA polymerase catalyzes the transcription of DNA into RNA using the four ribonucleoside triphosphates as substrates. The sequence is that of DNA-directed RNA polymerase subunit beta from Acholeplasma laidlawii (strain PG-8A).